Consider the following 145-residue polypeptide: uncharacterized protein (145 aa).

The tract at residues M1 to F59 is disordered.

This is an uncharacterized protein from Caenorhabditis elegans.